We begin with the raw amino-acid sequence, 363 residues long: NADH-quinone oxidoreductase subunit H (363 aa).

A run of 9 helical transmembrane segments spans residues 62–82, 96–116, 127–147, 163–183, 202–222, 238–257, 264–286, 299–319, and 339–359; these read GPMY…KLLF, FVIA…VVPF, VGLL…ILAG, AAQV…VMIA, FFDW…VSGV, EIVA…LFFL, ILVS…QGWV, KGGW…YIWF, and FIPL…YGVI.

It belongs to the complex I subunit 1 family. As to quaternary structure, NDH-1 is composed of 14 different subunits. Subunits NuoA, H, J, K, L, M, N constitute the membrane sector of the complex.

Its subcellular location is the cell inner membrane. It carries out the reaction a quinone + NADH + 5 H(+)(in) = a quinol + NAD(+) + 4 H(+)(out). Functionally, NDH-1 shuttles electrons from NADH, via FMN and iron-sulfur (Fe-S) centers, to quinones in the respiratory chain. The immediate electron acceptor for the enzyme in this species is believed to be ubiquinone. Couples the redox reaction to proton translocation (for every two electrons transferred, four hydrogen ions are translocated across the cytoplasmic membrane), and thus conserves the redox energy in a proton gradient. This subunit may bind ubiquinone. In Xanthomonas axonopodis pv. citri (strain 306), this protein is NADH-quinone oxidoreductase subunit H.